Here is a 131-residue protein sequence, read N- to C-terminus: Profilin-2 (131 aa).

It belongs to the profilin family. As to quaternary structure, occurs in many kinds of cells as a complex with monomeric actin in a 1:1 ratio.

Its subcellular location is the cytoplasm. The protein resides in the cytoskeleton. In terms of biological role, binds to actin and affects the structure of the cytoskeleton. At high concentrations, profilin prevents the polymerization of actin, whereas it enhances it at low concentrations. By binding to PIP2, it inhibits the formation of IP3 and DG. This chain is Profilin-2 (PRO2), found in Parietaria judaica (Pellitory-of-the-wall).